The sequence spans 60 residues: Conotoxin Cl1.1 (60 aa).

The first 19 residues, 1-19 (MRCLPVIVILLLLISSAAA), serve as a signal peptide directing secretion. The propeptide occupies 20–48 (VVEGPLRVNRRLRPRKAPVDMQARDWNWG).

This sequence belongs to the conotoxin T superfamily. Post-translationally, contains 2 disulfide bonds. In terms of tissue distribution, expressed by the venom duct.

The protein resides in the secreted. The sequence is that of Conotoxin Cl1.1 from Californiconus californicus (California cone).